The chain runs to 457 residues: Bifunctional protein GlmU (457 aa).

The pyrophosphorylase stretch occupies residues 1 to 229 (MYNCAIILAA…YEEIMGVNSR (229 aa)). UDP-N-acetyl-alpha-D-glucosamine contacts are provided by residues 8–11 (LAAG), K22, Q73, and 78–79 (GT). D103 contacts Mg(2+). Residues G140, E155, N170, and N227 each coordinate UDP-N-acetyl-alpha-D-glucosamine. A Mg(2+)-binding site is contributed by N227. The interval 230–250 (VQLSEAEIVMRKRINHKHMVN) is linker. Residues 251–457 (GVTFIDCEST…WLDKKGLLKK (207 aa)) form an N-acetyltransferase region. Positions 332 and 350 each coordinate UDP-N-acetyl-alpha-D-glucosamine. Catalysis depends on H362, which acts as the Proton acceptor. The UDP-N-acetyl-alpha-D-glucosamine site is built by Y365 and N376. Acetyl-CoA is bound by residues 385–386 (NY), A422, and R439.

It in the N-terminal section; belongs to the N-acetylglucosamine-1-phosphate uridyltransferase family. The protein in the C-terminal section; belongs to the transferase hexapeptide repeat family. In terms of assembly, homotrimer. Mg(2+) serves as cofactor.

It localises to the cytoplasm. It catalyses the reaction alpha-D-glucosamine 1-phosphate + acetyl-CoA = N-acetyl-alpha-D-glucosamine 1-phosphate + CoA + H(+). It carries out the reaction N-acetyl-alpha-D-glucosamine 1-phosphate + UTP + H(+) = UDP-N-acetyl-alpha-D-glucosamine + diphosphate. Its pathway is nucleotide-sugar biosynthesis; UDP-N-acetyl-alpha-D-glucosamine biosynthesis; N-acetyl-alpha-D-glucosamine 1-phosphate from alpha-D-glucosamine 6-phosphate (route II): step 2/2. The protein operates within nucleotide-sugar biosynthesis; UDP-N-acetyl-alpha-D-glucosamine biosynthesis; UDP-N-acetyl-alpha-D-glucosamine from N-acetyl-alpha-D-glucosamine 1-phosphate: step 1/1. It participates in bacterial outer membrane biogenesis; LPS lipid A biosynthesis. Its function is as follows. Catalyzes the last two sequential reactions in the de novo biosynthetic pathway for UDP-N-acetylglucosamine (UDP-GlcNAc). The C-terminal domain catalyzes the transfer of acetyl group from acetyl coenzyme A to glucosamine-1-phosphate (GlcN-1-P) to produce N-acetylglucosamine-1-phosphate (GlcNAc-1-P), which is converted into UDP-GlcNAc by the transfer of uridine 5-monophosphate (from uridine 5-triphosphate), a reaction catalyzed by the N-terminal domain. The polypeptide is Bifunctional protein GlmU (Clostridium botulinum (strain Langeland / NCTC 10281 / Type F)).